Consider the following 122-residue polypeptide: Large-conductance mechanosensitive channel (122 aa).

Helical transmembrane passes span 29 to 49 (FGKI…GLIF) and 66 to 86 (GVFI…FLFI).

This sequence belongs to the MscL family. Homopentamer.

Its subcellular location is the cell membrane. In terms of biological role, channel that opens in response to stretch forces in the membrane lipid bilayer. May participate in the regulation of osmotic pressure changes within the cell. This is Large-conductance mechanosensitive channel from Macrococcus caseolyticus (strain JCSC5402) (Macrococcoides caseolyticum).